Here is a 585-residue protein sequence, read N- to C-terminus: Glucose oxidase-like protein fsoC (585 aa).

Alanine 104 contributes to the FAD binding site. Catalysis depends on histidine 521, which acts as the Proton donor. Histidine 564 (proton acceptor) is an active-site residue.

It belongs to the GMC oxidoreductase family. In terms of assembly, monomer. It depends on FAD as a cofactor.

Its function is as follows. Glucose oxidase-like protein; part of the gene cluster that mediates the biosynthesis of the enfumafungin-type antibiotic fuscoatroside. Four enzymes are sufficient to produce fuscoatroside: the terpene cyclase-glycosyl transferase fusion protein fsoAthe cytochrome P450 monoxygenases fsoD and fsoE, and the acetyltransferase fsoF; the cytochrome P450 monooxygenase fsoB and the glucose oxidase-like protein fsoC do not seem to play a role in biosynthesis of fuscoatroside. Glucose oxidase; part of the gene cluster that mediates the biosynthesis of the enfumafungin-type antibiotic, fuscoatroside. This chain is Glucose oxidase-like protein fsoC, found in Humicola fuscoatra.